Reading from the N-terminus, the 1236-residue chain is Chitinase-like protein PB1E7.04c (1236 aa).

The N-terminal stretch at 1–19 is a signal peptide; that stretch reads MRLISSLLLLVYSARLALS. Asparagine 21, asparagine 24, asparagine 54, asparagine 123, asparagine 225, asparagine 237, asparagine 255, asparagine 267, asparagine 277, asparagine 288, and asparagine 309 each carry an N-linked (GlcNAc...) asparagine glycan. The 300-residue stretch at 26–325 folds into the GH18 domain; that stretch reads TAVLGYWGSN…EAIHKILDTK (300 aa). Disordered stretches follow at residues 326-367, 449-497, and 584-625; these read SKHS…TSSA, VSSI…QSTL, and TSSP…STIL. The segment covering 339–351 has biased composition (polar residues); the sequence is QGLESTSSIALNP. Residues 352–367 are compositionally biased toward low complexity; it reads TSSISSTSSSSSTSSA. Residues asparagine 715, asparagine 737, asparagine 768, asparagine 786, and asparagine 813 are each glycosylated (N-linked (GlcNAc...) asparagine). Disordered stretches follow at residues 804–836, 868–927, 946–979, and 1125–1159; these read ISTS…LAAN, TTAL…TSSS, TPTS…SSIA, and AASG…TPSN. Residues 810-821 are compositionally biased toward polar residues; it reads NEYNTSFHAPTV. Positions 822–832 are enriched in low complexity; that stretch reads SSTTSSSSTTS. Low complexity predominate over residues 1125 to 1156; it reads AASGSSTVTSSATASSSSSAATTADSSVTTDT.

This sequence belongs to the glycosyl hydrolase 18 family. Chitinase class III subfamily.

The protein resides in the secreted. The sequence is that of Chitinase-like protein PB1E7.04c from Schizosaccharomyces pombe (strain 972 / ATCC 24843) (Fission yeast).